Reading from the N-terminus, the 222-residue chain is MLANENSLLTMFRELGSGKLPLQIEQFERGKTIFFPGDPAERVYLLVKGAVKLSRVYESGEEITVALLRENSVFGVLSLLTGQRSDRFYHAVAFTPVQLFSVPIEFMQKALIERPELANVMLQGLSSRILQTEMMIETLAHRDMGSRLVSFLLILCRDFGIPSPDGITIDLKLSHQAIAEAIGSTRVTVTRLLGDLRESKLIAIHKKRITVFNPVALSQQFS.

6 to 128 serves as a coordination point for a nucleoside 3',5'-cyclic phosphate; it reads NSLLTMFREL…NVMLQGLSSR (123 aa). Residues 142 to 215 form the HTH crp-type domain; the sequence is RDMGSRLVSF…KKRITVFNPV (74 aa). Residues 175–194 constitute a DNA-binding region (H-T-H motif); it reads HQAIAEAIGSTRVTVTRLLG.

Its function is as follows. Required for full expression of proteins subject to ammonium repression. Transcriptional activator of genes subject to nitrogen control. This chain is Global nitrogen regulator (ntcA), found in Synechococcus elongatus (strain ATCC 33912 / PCC 7942 / FACHB-805) (Anacystis nidulans R2).